The sequence spans 123 residues: Small ribosomal subunit protein uS12cz/uS12cy (123 aa).

It belongs to the universal ribosomal protein uS12 family. In terms of assembly, part of the 30S ribosomal subunit.

It is found in the plastid. It localises to the chloroplast. Functionally, with S4 and S5 plays an important role in translational accuracy. Located at the interface of the 30S and 50S subunits. The polypeptide is Small ribosomal subunit protein uS12cz/uS12cy (rps12-A) (Eucalyptus globulus subsp. globulus (Tasmanian blue gum)).